The following is a 179-amino-acid chain: UPF0227 protein VS_2073 (179 aa).

This sequence belongs to the UPF0227 family.

This chain is UPF0227 protein VS_2073, found in Vibrio atlanticus (strain LGP32) (Vibrio splendidus (strain Mel32)).